The primary structure comprises 881 residues: Leucine--tRNA ligase (881 aa).

Residues 48-58 carry the 'HIGH' region motif; the sequence is PYPSGKLHMGH. Residues 638–642 carry the 'KMSKS' region motif; that stretch reads KMSKS. K641 lines the ATP pocket.

This sequence belongs to the class-I aminoacyl-tRNA synthetase family.

Its subcellular location is the cytoplasm. It catalyses the reaction tRNA(Leu) + L-leucine + ATP = L-leucyl-tRNA(Leu) + AMP + diphosphate. This is Leucine--tRNA ligase from Janthinobacterium sp. (strain Marseille) (Minibacterium massiliensis).